The primary structure comprises 121 residues: Small ribosomal subunit protein bS6 (121 aa).

The protein belongs to the bacterial ribosomal protein bS6 family.

Binds together with bS18 to 16S ribosomal RNA. This Rickettsia conorii (strain ATCC VR-613 / Malish 7) protein is Small ribosomal subunit protein bS6.